Consider the following 306-residue polypeptide: tRNA pseudouridine synthase B (306 aa).

Residue Asp43 is the Nucleophile of the active site.

The protein belongs to the pseudouridine synthase TruB family. Type 1 subfamily.

The enzyme catalyses uridine(55) in tRNA = pseudouridine(55) in tRNA. Functionally, responsible for synthesis of pseudouridine from uracil-55 in the psi GC loop of transfer RNAs. The chain is tRNA pseudouridine synthase B from Anaplasma marginale (strain St. Maries).